A 333-amino-acid polypeptide reads, in one-letter code: MGPAELVQKISINAESPRGGERNDCGAGAERGPAGGWRQKCAAYVLALRPWSFSASLTPVALGSALAYRAEGALDPRLLVGSAVAVLAVHGAGNLVNTYYDFSKGIDHKKSDDRTLVDQILEPQDVVRFGVFLYTVGCICAAGLYAVSTLKLEHLALVYFGGLSSSFLYTGGIGFKYVALGDVVILITFGPLAVMFAHAVQVGYLSVSPLLYAVPLALSTEAILHSNNTRDMESDQQAGIVTLAIIIGPAFSYVLYTVLLFLPYLIFCVLATRYTISMALPLLTIPMAFSLERQFRSQNFNKIPQRTAKLNLLLGLFYVFGIMLAPAGALPKL.

Residues Asn-13 to Pro-33 are disordered. 8 helical membrane passes run Leu-78–Thr-98, Phe-129–Thr-149, Leu-155–Phe-175, Tyr-177–Ala-197, Ala-199–Ser-219, Ile-240–Leu-260, Leu-265–Ile-285, and Leu-310–Leu-330.

The protein belongs to the UbiA prenyltransferase family.

The protein localises to the endoplasmic reticulum membrane. The protein resides in the golgi apparatus membrane. It is found in the mitochondrion membrane. It carries out the reaction menadiol + (2E,6E,10E)-geranylgeranyl diphosphate = menaquinol-4 + diphosphate. The enzyme catalyses all-trans-decaprenyl diphosphate + 4-hydroxybenzoate = 4-hydroxy-3-(all-trans-decaprenyl)benzoate + diphosphate. The protein operates within quinol/quinone metabolism; menaquinone biosynthesis. Its pathway is cofactor biosynthesis; ubiquinone biosynthesis. In terms of biological role, prenyltransferase that mediates the formation of menaquinone-4 (MK-4) and coenzyme Q10. MK-4 is a vitamin K2 isoform required for endothelial cell development. Mediates the conversion of phylloquinone (PK) into MK-4, probably by cleaving the side chain of phylloquinone (PK) to release 2-methyl-1,4-naphthoquinone (menadione; K3) and then prenylating it with geranylgeranyl pyrophosphate (GGPP) to form MK-4. Also plays a role in cardiovascular development independently of MK-4 biosynthesis, by acting as a coenzyme Q10 biosynthetic enzyme: coenzyme Q10, also named ubiquinone, plays an important antioxidant role in the cardiovascular system. Mediates biosynthesis of coenzyme Q10 in the Golgi membrane, leading to protect cardiovascular tissues from NOS3/eNOS-dependent oxidative stress. In Gallus gallus (Chicken), this protein is UbiA prenyltransferase domain-containing protein 1 (UBIAD1).